Reading from the N-terminus, the 313-residue chain is Methionyl-tRNA formyltransferase (313 aa).

S113 to P116 contacts (6S)-5,6,7,8-tetrahydrofolate.

Belongs to the Fmt family.

The enzyme catalyses L-methionyl-tRNA(fMet) + (6R)-10-formyltetrahydrofolate = N-formyl-L-methionyl-tRNA(fMet) + (6S)-5,6,7,8-tetrahydrofolate + H(+). In terms of biological role, attaches a formyl group to the free amino group of methionyl-tRNA(fMet). The formyl group appears to play a dual role in the initiator identity of N-formylmethionyl-tRNA by promoting its recognition by IF2 and preventing the misappropriation of this tRNA by the elongation apparatus. The sequence is that of Methionyl-tRNA formyltransferase from Francisella tularensis subsp. tularensis (strain FSC 198).